The primary structure comprises 619 residues: Probable galacturonosyltransferase 7 (619 aa).

Residues 1-19 lie on the Cytoplasmic side of the membrane; that stretch reads MKGGGGGGGGGGGGKRRWK. The helical; Signal-anchor for type II membrane protein transmembrane segment at 20–40 threads the bilayer; sequence VLVIGVLVLVILSMLVPLAFL. The Lumenal portion of the chain corresponds to 41-619; that stretch reads LGLHNGFHSP…RFLSDCNVNP (579 aa). N68, N106, N132, N343, and N421 each carry an N-linked (GlcNAc...) asparagine glycan. Positions 95–139 are disordered; it reads KSDINVGSRDVNATSGTDSKKRGLPVSPTVVANPSPANKTKSEAS. Positions 124-139 are enriched in polar residues; that stretch reads VVANPSPANKTKSEAS.

The protein belongs to the glycosyltransferase 8 family. Expressed in roots, inflorescences, flowers, siliques, leaves and stems.

Its subcellular location is the golgi apparatus membrane. Its pathway is glycan metabolism; pectin biosynthesis. Functionally, may be involved in pectin biosynthesis. This chain is Probable galacturonosyltransferase 7 (GAUT7), found in Arabidopsis thaliana (Mouse-ear cress).